The sequence spans 89 residues: Small ribosomal subunit protein uS15 (89 aa).

The protein belongs to the universal ribosomal protein uS15 family. In terms of assembly, part of the 30S ribosomal subunit. Forms a bridge to the 50S subunit in the 70S ribosome, contacting the 23S rRNA.

In terms of biological role, one of the primary rRNA binding proteins, it binds directly to 16S rRNA where it helps nucleate assembly of the platform of the 30S subunit by binding and bridging several RNA helices of the 16S rRNA. Functionally, forms an intersubunit bridge (bridge B4) with the 23S rRNA of the 50S subunit in the ribosome. The protein is Small ribosomal subunit protein uS15 of Streptococcus equi subsp. zooepidemicus (strain H70).